The following is a 33-amino-acid chain: Brevinin-2PTe (33 aa).

A disulfide bond links C27 and C33.

In terms of tissue distribution, expressed by the skin glands.

The protein resides in the secreted. In terms of biological role, has antibacterial activity against the Gram-positive bacterium S.aureus ATCC 25923 (MIC=36 uM) and the Gram-negative bacterium E.coli ATCC 25726 (MIC=18 uM). This is Brevinin-2PTe from Pulchrana picturata (Malaysian fire frog).